The chain runs to 132 residues: Small ribosomal subunit protein uS8c (132 aa).

This sequence belongs to the universal ribosomal protein uS8 family. In terms of assembly, part of the 30S ribosomal subunit.

It localises to the plastid. Its subcellular location is the chloroplast. Its function is as follows. One of the primary rRNA binding proteins, it binds directly to 16S rRNA central domain where it helps coordinate assembly of the platform of the 30S subunit. This chain is Small ribosomal subunit protein uS8c (rps8), found in Ceratophyllum demersum (Rigid hornwort).